We begin with the raw amino-acid sequence, 93 residues long: Exodeoxyribonuclease 7 small subunit (93 aa).

The span at 61–75 shows a compositional bias: basic and acidic residues; that stretch reads IDDNGDEKVYEKQTD. A disordered region spans residues 61–93; it reads IDDNGDEKVYEKQTDDPSNNGGGNRGFGSADEQ.

The protein belongs to the XseB family. In terms of assembly, heterooligomer composed of large and small subunits.

The protein localises to the cytoplasm. The catalysed reaction is Exonucleolytic cleavage in either 5'- to 3'- or 3'- to 5'-direction to yield nucleoside 5'-phosphates.. Bidirectionally degrades single-stranded DNA into large acid-insoluble oligonucleotides, which are then degraded further into small acid-soluble oligonucleotides. This Limosilactobacillus reuteri (strain DSM 20016) (Lactobacillus reuteri) protein is Exodeoxyribonuclease 7 small subunit.